Here is a 952-residue protein sequence, read N- to C-terminus: Lysosomal alpha-glucosidase (952 aa).

The signal sequence occupies residues Met-1 to Leu-27. A propeptide spanning residues Gly-28 to Gln-69 is cleaved from the precursor. Residues Pro-47–Thr-80 are disordered. Residues Thr-80–Pro-131 enclose the P-type domain. Disulfide bonds link Cys-82–Cys-109, Cys-92–Cys-108, and Cys-103–Cys-127. 3 N-linked (GlcNAc...) asparagine glycosylation sites follow: Asn-140, Asn-233, and Asn-390. Asp-404 is a binding site for substrate. The N-linked (GlcNAc...) asparagine glycan is linked to Asn-470. Asp-518 acts as the Nucleophile in catalysis. The active site involves Glu-521. The cysteines at positions 533 and 558 are disulfide-linked. Residues Arg-600 and Asp-616 each contribute to the substrate site. A disulfide bond links Cys-647 and Cys-658. A glycan (N-linked (GlcNAc...) asparagine) is linked at Asn-652. His-674 provides a ligand contact to substrate. N-linked (GlcNAc...) asparagine glycans are attached at residues Asn-882 and Asn-925.

The protein belongs to the glycosyl hydrolase 31 family.

It localises to the lysosome. The protein resides in the lysosome membrane. The enzyme catalyses Hydrolysis of terminal, non-reducing (1-&gt;4)-linked alpha-D-glucose residues with release of alpha-D-glucose.. In terms of biological role, essential for the degradation of glycogen in lysosomes. Has highest activity on alpha-1,4-linked glycosidic linkages, but can also hydrolyze alpha-1,6-linked glucans. The chain is Lysosomal alpha-glucosidase (GAA) from Pongo abelii (Sumatran orangutan).